A 68-amino-acid chain; its full sequence is DNA-directed RNA polymerase subunit omega (68 aa).

This sequence belongs to the RNA polymerase subunit omega family. In terms of assembly, the RNAP catalytic core consists of 2 alpha, 1 beta, 1 beta' and 1 omega subunit. When a sigma factor is associated with the core the holoenzyme is formed, which can initiate transcription.

It carries out the reaction RNA(n) + a ribonucleoside 5'-triphosphate = RNA(n+1) + diphosphate. In terms of biological role, promotes RNA polymerase assembly. Latches the N- and C-terminal regions of the beta' subunit thereby facilitating its interaction with the beta and alpha subunits. The sequence is that of DNA-directed RNA polymerase subunit omega from Chromobacterium violaceum (strain ATCC 12472 / DSM 30191 / JCM 1249 / CCUG 213 / NBRC 12614 / NCIMB 9131 / NCTC 9757 / MK).